A 1003-amino-acid polypeptide reads, in one-letter code: Helicase-like transcription factor (1003 aa).

An Omega-N-methylarginine modification is found at Arg-27. The segment at 38–287 (EFQDIIPPDD…FSVKERPENV (250 aa)) is DNA-binding. Residue Lys-112 forms a Glycyl lysine isopeptide (Lys-Gly) (interchain with G-Cter in SUMO2) linkage. Residue Tyr-195 is modified to Phosphotyrosine; by JAK2. A Glycyl lysine isopeptide (Lys-Gly) (interchain with G-Cter in SUMO2) cross-link involves residue Lys-211. An ATP-binding site is contributed by 294 to 301 (DDMGLGKT). A disordered region spans residues 317 to 373 (PLLSKRGKKNHPGKEYKDETIKRRGSNMDKKEDGHSESSTCGEEPSISGTPEKSSCT). Positions 328 to 352 (PGKEYKDETIKRRGSNMDKKEDGHS) are enriched in basic and acidic residues. The span at 353–373 (ESSTCGEEPSISGTPEKSSCT) shows a compositional bias: polar residues. Ser-394, Ser-395, and Ser-397 each carry phosphoserine. In terms of domain architecture, Helicase ATP-binding spans 433–600 (DSKFALTFFA…WSLLSFLKLK (168 aa)). Positions 551–554 (DEGH) match the DEGH box motif. Phosphothreonine is present on Thr-730. Residues 754 to 795 (CAICLDSLTFPVITHCAHVFCKPCICQVIHSEQPHAKCPLCR) form an RING-type zinc finger. The Helicase C-terminal domain maps to 831–990 (ALMHALIELR…TKKTDANDMK (160 aa)). Positions 919–1003 (SRVFLMDPAW…INEIRTLIDL (85 aa)) are interaction with SP1 and SP3.

It belongs to the SNF2/RAD54 helicase family. RAD16 subfamily. As to quaternary structure, interacts with SP1 and SP3 independently of DNA; the interaction with these transcriptional factors may be required for basal transcription of target genes. Interacts with EGR1; the interaction requires prior binding to DNA and represses c-Rel via a DNA looping mechanism. Interacts with GATA4. Interacts with PCNA; the interaction promotes polyubiquitination of PCNA through association with the UBE2B-RAD18 and UBE2V2-UBE2N ubiquitin ligase complexes. Interacts with RAD18, SHPRH, UBE2V2 and UBE2N. Expressed in brain, heart, kidney, liver, lung, pancreas, placenta and skeletal muscle.

Its subcellular location is the cytoplasm. The protein localises to the nucleus. It is found in the nucleolus. It localises to the nucleoplasm. The enzyme catalyses S-ubiquitinyl-[E2 ubiquitin-conjugating enzyme]-L-cysteine + [acceptor protein]-L-lysine = [E2 ubiquitin-conjugating enzyme]-L-cysteine + N(6)-ubiquitinyl-[acceptor protein]-L-lysine.. It participates in protein modification; protein ubiquitination. Has both helicase and E3 ubiquitin ligase activities. Possesses intrinsic ATP-dependent nucleosome-remodeling activity. This activity may be required for transcriptional activation or repression of specific target promoters. These may include the SERPINE1, to which this protein can bind directly. Plays a role in error-free postreplication repair (PRR) of damaged DNA and maintains genomic stability through acting as a ubiquitin ligase for 'Lys-63'-linked polyubiquitination of chromatin-bound PCNA. This is Helicase-like transcription factor (Hltf) from Mus musculus (Mouse).